The primary structure comprises 313 residues: Porphobilinogen deaminase (313 aa).

Residue C242 is modified to S-(dipyrrolylmethanemethyl)cysteine.

Belongs to the HMBS family. In terms of assembly, monomer. Dipyrromethane is required as a cofactor.

The catalysed reaction is 4 porphobilinogen + H2O = hydroxymethylbilane + 4 NH4(+). It functions in the pathway porphyrin-containing compound metabolism; protoporphyrin-IX biosynthesis; coproporphyrinogen-III from 5-aminolevulinate: step 2/4. In terms of biological role, tetrapolymerization of the monopyrrole PBG into the hydroxymethylbilane pre-uroporphyrinogen in several discrete steps. The polypeptide is Porphobilinogen deaminase (Pseudomonas entomophila (strain L48)).